The following is a 199-amino-acid chain: MVLVKICGLMHSEDILAVNTAGADFAGFVFAPGRHQVSLEQALALNQLLHSKIKTVGVFVNEPVAEILAIYQAGAIDVAQLHGKSTPAEITQLQQAGLKVIQVFERQAIDLTSMADYLMVDSGKGSGQLLNLKAIPHISRPLILAGGLTPLNVRQAVQLVQPTMVDVSSGVETNGHKDADKITQFIQQAKEDIIYEDIK.

Belongs to the TrpF family.

The enzyme catalyses N-(5-phospho-beta-D-ribosyl)anthranilate = 1-(2-carboxyphenylamino)-1-deoxy-D-ribulose 5-phosphate. The protein operates within amino-acid biosynthesis; L-tryptophan biosynthesis; L-tryptophan from chorismate: step 3/5. The chain is N-(5'-phosphoribosyl)anthranilate isomerase (trpF) from Lacticaseibacillus casei (Lactobacillus casei).